Consider the following 868-residue polypeptide: Alanine--tRNA ligase (868 aa).

The Zn(2+) site is built by histidine 556, histidine 560, cysteine 666, and histidine 670.

The protein belongs to the class-II aminoacyl-tRNA synthetase family. Zn(2+) serves as cofactor.

Its subcellular location is the cytoplasm. The catalysed reaction is tRNA(Ala) + L-alanine + ATP = L-alanyl-tRNA(Ala) + AMP + diphosphate. In terms of biological role, catalyzes the attachment of alanine to tRNA(Ala) in a two-step reaction: alanine is first activated by ATP to form Ala-AMP and then transferred to the acceptor end of tRNA(Ala). Also edits incorrectly charged Ser-tRNA(Ala) and Gly-tRNA(Ala) via its editing domain. This is Alanine--tRNA ligase from Elusimicrobium minutum (strain Pei191).